Consider the following 382-residue polypeptide: Neuropeptide Y receptor type 1 (382 aa).

Residues methionine 1 to histidine 33 are Extracellular-facing. 3 N-linked (GlcNAc...) asparagine glycosylation sites follow: asparagine 2, asparagine 11, and asparagine 17. The chain crosses the membrane as a helical span at residues leucine 34–valine 54. The Cytoplasmic segment spans residues serine 55–asparagine 75. A helical membrane pass occupies residues isoleucine 76–threonine 96. The Extracellular portion of the chain corresponds to phenylalanine 97 to asparagine 115. A disulfide bridge links cysteine 112 with cysteine 197. The chain crosses the membrane as a helical span at residues proline 116–glutamate 136. Topologically, residues arginine 137 to histidine 153 are cytoplasmic. The helical transmembrane segment at alanine 154–isoleucine 174 threads the bilayer. At tyrosine 175 to tyrosine 210 the chain is on the extracellular side. The helical transmembrane segment at threonine 211–phenylalanine 231 threads the bilayer. Over lysine 232–arginine 259 the chain is Cytoplasmic. A helical transmembrane segment spans residues isoleucine 260–isoleucine 280. Over phenylalanine 281–asparagine 298 the chain is Extracellular. Residues leucine 299–tyrosine 319 form a helical membrane-spanning segment. At glycine 320–isoleucine 382 the chain is on the cytoplasmic side. Cysteine 337 carries the S-palmitoyl cysteine lipid modification. Phosphoserine occurs at positions 367 and 375.

It belongs to the G-protein coupled receptor 1 family. As to expression, brain.

The protein resides in the cell membrane. Functionally, receptor for neuropeptide Y and peptide YY. The protein is Neuropeptide Y receptor type 1 (Npy1r) of Rattus norvegicus (Rat).